A 160-amino-acid polypeptide reads, in one-letter code: Phosphopantetheine adenylyltransferase (160 aa).

Residue S9 participates in substrate binding. ATP contacts are provided by residues 9-10 and H17; that span reads SF. Residues K41, T73, and R87 each coordinate substrate. Residues 88–90, E98, and 123–129 each bind ATP; these read GMR and YTFFSSS.

Belongs to the bacterial CoaD family. In terms of assembly, homohexamer. Mg(2+) is required as a cofactor.

It localises to the cytoplasm. The catalysed reaction is (R)-4'-phosphopantetheine + ATP + H(+) = 3'-dephospho-CoA + diphosphate. It participates in cofactor biosynthesis; coenzyme A biosynthesis; CoA from (R)-pantothenate: step 4/5. Its function is as follows. Reversibly transfers an adenylyl group from ATP to 4'-phosphopantetheine, yielding dephospho-CoA (dPCoA) and pyrophosphate. In Roseiflexus castenholzii (strain DSM 13941 / HLO8), this protein is Phosphopantetheine adenylyltransferase.